The following is a 249-amino-acid chain: ATP synthase subunit a (249 aa).

6 helical membrane-spanning segments follow: residues 33–53 (YMLIAVAIISLLMLASGAQLV), 83–103 (FFPLIFSLFMFICVSNLIGII), 113–133 (LIVTAALALLVFFTVLIYGVA), 139–159 (FFSIFVPHGVPGYILPLVMFI), 188–208 (VFAGFVAMLGFSLGALGWVGG), and 216–236 (VALYALEILVAFLQAYVFAIL).

This sequence belongs to the ATPase A chain family. F-type ATPases have 2 components, CF(1) - the catalytic core - and CF(0) - the membrane proton channel. CF(1) has five subunits: alpha(3), beta(3), gamma(1), delta(1), epsilon(1). CF(0) has three main subunits: a(1), b(2) and c(9-12). The alpha and beta chains form an alternating ring which encloses part of the gamma chain. CF(1) is attached to CF(0) by a central stalk formed by the gamma and epsilon chains, while a peripheral stalk is formed by the delta and b chains.

It localises to the cell inner membrane. Its function is as follows. Key component of the proton channel; it plays a direct role in the translocation of protons across the membrane. The polypeptide is ATP synthase subunit a (Bradyrhizobium diazoefficiens (strain JCM 10833 / BCRC 13528 / IAM 13628 / NBRC 14792 / USDA 110)).